We begin with the raw amino-acid sequence, 180 residues long: Nucleoside triphosphate/diphosphate phosphatase (180 aa).

R26 serves as the catalytic Proton donor. The Mg(2+) site is built by N90, D106, D108, D110, D123, and E126.

This sequence belongs to the Ntdp family. It depends on Mg(2+) as a cofactor.

It carries out the reaction a ribonucleoside 5'-triphosphate + H2O = a ribonucleoside 5'-diphosphate + phosphate + H(+). The catalysed reaction is a ribonucleoside 5'-diphosphate + H2O = a ribonucleoside 5'-phosphate + phosphate + H(+). Its function is as follows. Has nucleoside phosphatase activity towards nucleoside triphosphates and nucleoside diphosphates. This is Nucleoside triphosphate/diphosphate phosphatase from Staphylococcus aureus (strain MSSA476).